A 97-amino-acid polypeptide reads, in one-letter code: Sperm-associated acrosin inhibitor (97 aa).

Positions 1 to 26 (MAFFSSRVRALFILVLVLPLCSETGF) are cleaved as a signal peptide. A Kazal-like domain is found at 32–90 (TRKEPDCDVYRSHLFFCTREMDPICGTNGKSYANPCIFCSEKLGRNEKFDFGHWGHCRE). Intrachain disulfides connect cysteine 38–cysteine 70, cysteine 48–cysteine 67, and cysteine 56–cysteine 88.

In terms of tissue distribution, seminal plasma.

Its subcellular location is the secreted. Its function is as follows. Inhibits acrosin. This Sus scrofa (Pig) protein is Sperm-associated acrosin inhibitor.